Reading from the N-terminus, the 1101-residue chain is Lysylphosphatidylglycerol biosynthesis bifunctional protein LysX (1101 aa).

Residues 1–601 (MTATRLVRAH…RLHSDGTAPD (601 aa)) are phosphatidylglycerol lysyltransferase. A run of 7 helical transmembrane segments spans residues 18–38 (VPAA…LASV), 60–80 (FPDT…ALAA), 84–104 (IAWW…VTGL), 113–133 (DVGE…LLLA), 151–171 (VTLV…LELF), 183–200 (YALN…GAFS), and 207–227 (VNAL…VVLF). The segment at 602–1101 (RIGPVGDGAD…TLPFPLAKPR (500 aa)) is lysine--tRNA ligase. Positions 662–740 (VTVSGRVLRA…SVLVTRWRLI (79 aa)) form a DNA-binding region, OB. Mg(2+)-binding residues include Asp1013 and Glu1020.

In the N-terminal section; belongs to the LPG synthetase family. It in the C-terminal section; belongs to the class-II aminoacyl-tRNA synthetase family. It depends on Mg(2+) as a cofactor.

It is found in the cell membrane. The catalysed reaction is tRNA(Lys) + L-lysine + ATP = L-lysyl-tRNA(Lys) + AMP + diphosphate. It catalyses the reaction L-lysyl-tRNA(Lys) + a 1,2-diacyl-sn-glycero-3-phospho-(1'-sn-glycerol) = a 1,2-diacyl-sn-glycero-3-phospho-1'-(3'-O-L-lysyl)-sn-glycerol + tRNA(Lys). Functionally, catalyzes the production of L-lysyl-tRNA(Lys)transfer and the transfer of a lysyl group from L-lysyl-tRNA(Lys) to membrane-bound phosphatidylglycerol (PG), which produces lysylphosphatidylglycerol (LPG), one of the components of the bacterial membrane with a positive net charge. LPG synthesis contributes to the resistance to cationic antimicrobial peptides (CAMPs) and likely protects M.tuberculosis against the CAMPs produced by competiting microorganisms (bacteriocins). In fact, the modification of anionic phosphatidylglycerol with positively charged L-lysine results in repulsion of the peptides. The protein is Lysylphosphatidylglycerol biosynthesis bifunctional protein LysX (lysX) of Mycolicibacterium gilvum (strain PYR-GCK) (Mycobacterium gilvum (strain PYR-GCK)).